Here is a 185-residue protein sequence, read N- to C-terminus: 3-hexulose-6-phosphate isomerase (185 aa).

The region spanning leucine 29–leucine 172 is the SIS domain. Substrate is bound by residues serine 47 and serine 86–threonine 91. Glutamate 152 (proton acceptor) is an active-site residue.

Belongs to the SIS family. PHI subfamily. In terms of assembly, homotetramer.

The catalysed reaction is D-arabino-hex-3-ulose 6-phosphate = beta-D-fructose 6-phosphate. It participates in one-carbon metabolism; formaldehyde assimilation via RuMP pathway; D-fructose 6-phosphate from D-ribulose 5-phosphate and formaldehyde: step 2/2. Its function is as follows. Catalyzes the isomerization between 3-hexulose 6-phosphate and fructose 6-phosphate. Together with HxlA, may act as a formaldehyde detoxification system. The sequence is that of 3-hexulose-6-phosphate isomerase (hxlB) from Bacillus subtilis (strain 168).